The chain runs to 339 residues: MGDRHTIQQNLNGLLSKLNDPDPDMRYMSLNDLYGILSNPCSSYLAHDQASATRLAEGLLKALDDQHGDVQNQALKCLGPLVARLPLEGLRTLLERLSNLTTSQTIDTSVPNTALRVIVTALPRPQPNQAPSPDANMAYSAVSEVLIPRLIGPGPHKRRGSVTKGMLEKDPAKGFSSDAIDVLIQVASCFGALLQESELTALEKAVMSIIDNDTAGTVVTKRALAAISALVVYFSDEQFGILVSELVERFNSPQLSTVHRRHLIAAVGCLARTVPAKFGPHLSTLAPFIFSAVGEDNLEVSHVLHYLCTSASNVYSSRNKPKIYHQYRQLPKEKLITGM.

HEAT repeat units follow at residues 5–42 and 50–87; these read HTIQ…NPCS and ASAT…RLPL.

Interacts with candA-C. Interacts with unneddylated cullins culA and culD; interaction occurs only when complexed with candA-C.

The protein localises to the nucleus. Its function is as follows. Assembly factor of SCF (SKP1-CUL1-F-box protein) E3 ubiquitin ligase complexes that promotes the exchange of the substrate-recognition F-box subunit in SCF complexes, thereby playing a key role in the cellular repertoire of SCF complexes. Acts as a F-box protein exchange factor when interacting with candA-C. The protein is Cullin-associated NEDD8-dissociated protein 1, N-terminal part (candA-N) of Emericella nidulans (strain FGSC A4 / ATCC 38163 / CBS 112.46 / NRRL 194 / M139) (Aspergillus nidulans).